The chain runs to 196 residues: uncharacterized protein (196 aa).

Belongs to the NAD(P)H dehydrogenase (quinone) family.

This is an uncharacterized protein from Escherichia coli (strain K12).